The sequence spans 451 residues: GABA transporter 1 (451 aa).

11 consecutive transmembrane segments (helical) span residues 35–55 (CGFHLTTSIVAPALLSLPYAF), 57–77 (FLGWAAGISCLVGGAAVTFYS), 115–135 (VGPIQMAVCYGVVIANALLGG), 153–173 (LFEFVIIFGCLLLVLAQFPSF), 182–202 (LSLLLCLLYSASAAAASIYIG), 222–242 (VFGIFNAMAIIATTYGNGIIP), 262–282 (MCYLVVIMTFFTVAITGYWAF), 308–328 (FIFLVNLFTVLQLSAVAVVYL), 356–376 (LVVRSLFVVMATIVAAMLPFF), 382–402 (LLGAFGFIPLDFVLPVVFFNF), and 411–431 (FIFWINTVIAVVFSCLGVIAM).

The protein belongs to the amino acid/polyamine transporter 2 family. Amino acid/auxin permease (AAAP) (TC 2.A.18.2) subfamily. As to expression, highly expressed in flowers and at lower levels in roots, leaves and stems.

It localises to the cell membrane. Its function is as follows. High affinity gamma-aminobutyric acid (GABA) transporter probably involved in GABA uptake into cells. When expressed in a heterologous system (Xenopus oocytes), imports GABA, butylamine, beta- and L-Alanine, 5-aminovaleric acid, 6-aminocaproic acid and 8-aminocaprylic acid, but does not mediate the transport of proline or glycine betaine. The polypeptide is GABA transporter 1 (GAT1) (Arabidopsis thaliana (Mouse-ear cress)).